Reading from the N-terminus, the 351-residue chain is MFCFLGLRLLKYITFRTAYATIFAFLLALIFGPFIISRLKKLKLDQILRKDGPKHHLSEKMGIPTMGGVLIFFCVLVSLFFWIHFFNIYFLIVLFVMVSFACLGFTDDLLKIKRKNSDGLNPKFKIYGQILFSFISVVMLYYFGGEHVSILYFPFFKSLKLDLGILYIPFGMFVLISASNSFNLTDGLDGLAIGLSIVVIGALIIIAYLTSRVDFALYLNIPNVKGCEELVIFLGALLGGSFGFLWFNAYPAKIMMGDTGSLSIGAVLGMVALILKSEILFAILAGVFVVETLSVIIQVVVYKKTKKRVFKMAPLHHHFEELGWSEMQVVIRFWIIGLIFAILALSTIKIR.

Helical transmembrane passes span 17–37 (TAYA…FIIS), 61–83 (MGIP…FFWI), 88–105 (IYFL…CLGF), 130–150 (ILFS…HVSI), 158–178 (SLKL…LISA), 190–210 (GLAI…AYLT), 230–250 (LVIF…FNAY), 254–274 (IMMG…VALI), 279–299 (ILFA…IIQV), and 328–348 (QVVI…LSTI).

Belongs to the glycosyltransferase 4 family. MraY subfamily. Requires Mg(2+) as cofactor.

It localises to the cell inner membrane. It catalyses the reaction UDP-N-acetyl-alpha-D-muramoyl-L-alanyl-gamma-D-glutamyl-meso-2,6-diaminopimeloyl-D-alanyl-D-alanine + di-trans,octa-cis-undecaprenyl phosphate = di-trans,octa-cis-undecaprenyl diphospho-N-acetyl-alpha-D-muramoyl-L-alanyl-D-glutamyl-meso-2,6-diaminopimeloyl-D-alanyl-D-alanine + UMP. The protein operates within cell wall biogenesis; peptidoglycan biosynthesis. Functionally, catalyzes the initial step of the lipid cycle reactions in the biosynthesis of the cell wall peptidoglycan: transfers peptidoglycan precursor phospho-MurNAc-pentapeptide from UDP-MurNAc-pentapeptide onto the lipid carrier undecaprenyl phosphate, yielding undecaprenyl-pyrophosphoryl-MurNAc-pentapeptide, known as lipid I. The sequence is that of Phospho-N-acetylmuramoyl-pentapeptide-transferase from Borrelia recurrentis (strain A1).